Reading from the N-terminus, the 432-residue chain is Endosome-associated-trafficking regulator 1 (432 aa).

Ser18 bears the Phosphoserine mark. Positions 126 to 143 (DTTTSRIYPKEASRHPLG) are enriched in basic and acidic residues. Residues 126-145 (DTTTSRIYPKEASRHPLGLE) are disordered. Position 148 is a phosphoserine (Ser148). The segment at 174–196 (LEEDEDDGWNITYLPSAVDQTHS) is required for interaction with PTPN13. Positions 226-250 (PPWTLSDTDSRISPASPAGSPNADF) are disordered. 2 positions are modified to phosphoserine: Ser241 and Ser245. Coiled-coil stretches lie at residues 262 to 289 (LRTL…VQSF) and 315 to 370 (FHDL…LRSG).

This sequence belongs to the ENTR1 family. As to quaternary structure, found in a complex with ENTR1, PTPN13 and GIT1. Interacts with PTPN13 (via the FERM domain). Interacts (via N-terminus) with GIT1 (via N- and C-terminus); this interaction is direct. Interacts with NOD2. Interacts (via N-terminus) with IFT88. Interacts with VPS35. Phosphorylated.

The protein resides in the cytoplasm. It localises to the early endosome. The protein localises to the endosome. Its subcellular location is the recycling endosome. It is found in the midbody. The protein resides in the cytoskeleton. It localises to the microtubule organizing center. The protein localises to the centrosome. Its subcellular location is the cilium basal body. In terms of biological role, may be involved in modulation of TNF response. May be involved in presentation of TNFRSF1A on the cell surface. Involved in the endosome-to-plasma membrane trafficking and recycling of SNX27-retromer-dependent cargo proteins, such as GLUT1. Involved in the regulation of cytokinesis; the function may involve PTPN13 and GIT1. Functionally, endosome-associated protein that plays a role in membrane receptor sorting, cytokinesis and ciliogenesis. Involved in the endosome-to-plasma membrane trafficking and recycling of SNX27-retromer-dependent cargo proteins, such as GLUT1. Involved in the regulation of cytokinesis; the function may involve PTPN13 and GIT1. Plays a role in the formation of cilia. Involved in cargo protein localization, such as PKD2, at primary cilia. Involved in the presentation of the tumor necrosis factor (TNF) receptor TNFRSF1A on the cell surface, and hence in the modulation of the TNF-induced apoptosis. The protein is Endosome-associated-trafficking regulator 1 of Mus musculus (Mouse).